Reading from the N-terminus, the 137-residue chain is uncharacterized protein (137 aa).

The segment at 67-87 (KSERQHQRVHHELPHDKPRQS) is disordered. Positions 70–85 (RQHQRVHHELPHDKPR) are enriched in basic and acidic residues.

This is an uncharacterized protein from Human cytomegalovirus (strain AD169) (HHV-5).